Here is a 379-residue protein sequence, read N- to C-terminus: Sialidase-2 (379 aa).

The short motif at 20-23 is the FRIP motif element; that stretch reads YRIP. Substrate contacts are provided by Arg21 and Arg41. The Proton acceptor role is filled by Asp46. Residues 127-138 form a BNR 1 repeat; it reads VTSTDYGMNWSP. Positions 179 and 181 each coordinate substrate. The BNR 2 repeat unit spans residues 197–208; that stretch reads FISLDHGHTWEL. Residues Glu218, Arg237, and Arg303 each contribute to the substrate site. The active-site Nucleophile is the Tyr333. Residue Glu354 is part of the active site.

The protein belongs to the glycosyl hydrolase 33 family. Detected in skeletal muscle.

The protein resides in the cytoplasm. It localises to the cytosol. It catalyses the reaction Hydrolysis of alpha-(2-&gt;3)-, alpha-(2-&gt;6)-, alpha-(2-&gt;8)- glycosidic linkages of terminal sialic acid residues in oligosaccharides, glycoproteins, glycolipids, colominic acid and synthetic substrates.. It carries out the reaction a ganglioside GD1a + H2O = a ganglioside GM1 + N-acetylneuraminate. The catalysed reaction is a ganglioside GM1 + H2O = a ganglioside GA1 + N-acetylneuraminate. The enzyme catalyses a ganglioside GT1b + H2O = a ganglioside GD1b + N-acetylneuraminate. It catalyses the reaction a ganglioside GD1b + H2O = a ganglioside GM1 + N-acetylneuraminate. It carries out the reaction a ganglioside GD3 + H2O = a ganglioside GM3 + N-acetylneuraminate. The catalysed reaction is a ganglioside GM3 + H2O = a beta-D-galactosyl-(1-&gt;4)-beta-D-glucosyl-(1&lt;-&gt;1)-ceramide + N-acetylneuraminate. The enzyme catalyses a ganglioside GM2 + H2O = a ganglioside GA2 + N-acetylneuraminate. It catalyses the reaction a neolactoside IV(3)-alpha-NeuAc-nLc4Cer(d18:1(4E)) + H2O = a neolactoside nLc4Cer(d18:1(4E)) + N-acetylneuraminate. It carries out the reaction N-acetyl-alpha-neuraminosyl-(2-&gt;3)-beta-D-galactosyl-(1-&gt;4)-D-glucose + H2O = lactose + N-acetylneuraminate. Its function is as follows. Exo-alpha-sialidase that catalyzes the hydrolytic cleavage of the terminal sialic acid (N-acetylneuraminic acid, Neu5Ac) of a glycan moiety in the catabolism of glycolipids, glycoproteins and oligosacharides. Recognizes sialyl linkage positions of the glycan moiety as well as the supramolecular organization of the sialoglycoconjugate. Displays preference for alpha-(2-&gt;3)-sialylated GD1a and GT1B gangliosides over alpha-(2-&gt;8)-sialylated GD1b, in both monomeric forms and micelles. Hydrolyzes monomeric GM1 ganglioside, but has no activity toward the miscellar form. Has lower sialidase activity for glycoproteins such as fetuin and TF/transferrin that carry a mixture of alpha-(2-&gt;3) and alpha-(2-&gt;6)-sialyl linkages. Cleaves milk oligosaccharide alpha-(2-&gt;3)-sialyllactose, but is inactive toward alpha-(2-&gt;6)-sialyllactose isomer. Has no activity toward colominic acid, a homomer of alpha-(2-&gt;8)-linked Neu5Ac residues. This is Sialidase-2 (Neu2) from Rattus norvegicus (Rat).